Reading from the N-terminus, the 307-residue chain is Acetyl-coenzyme A carboxylase carboxyl transferase subunit beta (307 aa).

The interval 1–26 (MAMAEPQDPKKGDKKTAERRGGGWLS) is disordered. Residues 7-21 (QDPKKGDKKTAERRG) are compositionally biased toward basic and acidic residues. Residues 45–307 (LWVKCPDTGE…LMMGRKRQAA (263 aa)) enclose the CoA carboxyltransferase N-terminal domain.

This sequence belongs to the AccD/PCCB family. Acetyl-CoA carboxylase is a heterohexamer composed of biotin carboxyl carrier protein (AccB), biotin carboxylase (AccC) and two subunits each of ACCase subunit alpha (AccA) and ACCase subunit beta (AccD).

The protein resides in the cytoplasm. The enzyme catalyses N(6)-carboxybiotinyl-L-lysyl-[protein] + acetyl-CoA = N(6)-biotinyl-L-lysyl-[protein] + malonyl-CoA. It functions in the pathway lipid metabolism; malonyl-CoA biosynthesis; malonyl-CoA from acetyl-CoA: step 1/1. Functionally, component of the acetyl coenzyme A carboxylase (ACC) complex. Biotin carboxylase (BC) catalyzes the carboxylation of biotin on its carrier protein (BCCP) and then the CO(2) group is transferred by the transcarboxylase to acetyl-CoA to form malonyl-CoA. This chain is Acetyl-coenzyme A carboxylase carboxyl transferase subunit beta, found in Caulobacter vibrioides (strain ATCC 19089 / CIP 103742 / CB 15) (Caulobacter crescentus).